The primary structure comprises 332 residues: DNA repair and recombination protein RadA (332 aa).

126 to 133 (GEFGSGKT) is a binding site for ATP.

This sequence belongs to the eukaryotic RecA-like protein family.

In terms of biological role, involved in DNA repair and in homologous recombination. Binds and assemble on single-stranded DNA to form a nucleoprotein filament. Hydrolyzes ATP in a ssDNA-dependent manner and promotes DNA strand exchange between homologous DNA molecules. The chain is DNA repair and recombination protein RadA from Pyrobaculum calidifontis (strain DSM 21063 / JCM 11548 / VA1).